Consider the following 92-residue polypeptide: Small ribosomal subunit protein uS19 (92 aa).

Belongs to the universal ribosomal protein uS19 family.

In terms of biological role, protein S19 forms a complex with S13 that binds strongly to the 16S ribosomal RNA. In Bradyrhizobium sp. (strain BTAi1 / ATCC BAA-1182), this protein is Small ribosomal subunit protein uS19.